A 560-amino-acid chain; its full sequence is Protein DA1-related 7 (560 aa).

UIM domains are found at residues 43-62 (SEAD…QETS), 92-111 (EEDQ…KGKS), and 155-174 (NEDA…KGQI). An LIM zinc-binding domain is found at 199–269 (SICDGCKSAI…HVCKKKFPGR (71 aa)).

Interacts with ubiquitin.

In terms of biological role, ubiquitin receptor that probably regulates developmental process. In Arabidopsis thaliana (Mouse-ear cress), this protein is Protein DA1-related 7 (DAR7).